The sequence spans 98 residues: NADH-ubiquinone oxidoreductase chain 4L (98 aa).

The next 3 helical transmembrane spans lie at 1 to 21 (MSLIHINIFLAFTVSLMGLLM), 29 to 49 (SLLCLEGMMLSLFIMATMMVL), and 61 to 81 (IILLVFAACEAALGLSLLVMI).

It belongs to the complex I subunit 4L family. As to quaternary structure, core subunit of respiratory chain NADH dehydrogenase (Complex I) which is composed of 45 different subunits.

It localises to the mitochondrion inner membrane. It carries out the reaction a ubiquinone + NADH + 5 H(+)(in) = a ubiquinol + NAD(+) + 4 H(+)(out). Its function is as follows. Core subunit of the mitochondrial membrane respiratory chain NADH dehydrogenase (Complex I) which catalyzes electron transfer from NADH through the respiratory chain, using ubiquinone as an electron acceptor. Part of the enzyme membrane arm which is embedded in the lipid bilayer and involved in proton translocation. The protein is NADH-ubiquinone oxidoreductase chain 4L (MT-ND4L) of Rhinoceros unicornis (Greater Indian rhinoceros).